The primary structure comprises 393 residues: Protein TsgA (393 aa).

12 consecutive transmembrane segments (helical) span residues 11 to 31, 51 to 71, 78 to 98, 101 to 121, 134 to 154, 162 to 182, 206 to 226, 245 to 265, 273 to 293, 298 to 318, 332 to 352, and 361 to 381; these read WISFLSYALTGALVIVTGMVM, FLNAGILISIFLNAWLMEIVP, FGFILMVLAVAGLMFSHSLAL, AAMFVLGLVSGITMSIGTFLI, LLFTDSFFSMAGMIFPMVAAF, WYWVYACIGLVYLAIFILTFG, IGVLFLAVAALCYILGQLGFI, ALVSDFWMSYMFGMWAFSFIL, ILTVLAGMAAVLMYLFITGTQ, WFILTLGFFSSAIYTSIITLG, FILTCGTIGTMLTFVVTGPIV, and LLTANGLYAVVFVMCFALGFV.

This sequence belongs to the major facilitator superfamily. TsgA family.

The protein resides in the cell inner membrane. The polypeptide is Protein TsgA (Salmonella dublin (strain CT_02021853)).